The sequence spans 565 residues: FAD-linked oxidoreductase ZEB1 (565 aa).

Residues 1-27 (MKLSPSKYLPVLLGTLSLTIANPSADC) form the signal peptide. N-linked (GlcNAc...) asparagine glycosylation is found at Asn-46, Asn-82, and Asn-100. One can recognise an FAD-binding PCMH-type domain in the interval 115 to 293 (LGNYVSYAIA…ISMTVKAHPG (179 aa)). 3 N-linked (GlcNAc...) asparagine glycosylation sites follow: Asn-340, Asn-352, and Asn-421.

It belongs to the oxygen-dependent FAD-linked oxidoreductase family.

Its pathway is mycotoxin biosynthesis. Functionally, FAD-linked oxidoreductase; part of the gene cluster that mediates the biosynthesis of zearalenone (ZEA), a nonsteroid estrogen that is a contaminant of cereal grains and causes estrogenic disorders in humans and animals. The ZEA backbone is synthesized from a single acetyl-CoA molecule and eight malonyl-CoA molecules. The reducing polyketide synthase ZEA2 is proposed to synthesize a reduced hexaketide intermediate by using different combinations of its reductive domains during each round of condensation. The hexaketide thioester is then transacylated to the non-reducing polyketide synthase ZEA1 and is further condensed with three malonyl-CoAs without reductive tailoring to yield a mixed reduced/unreduced nonaketide. ZEA1 must be able to interact with ZEA2 to facilitate starter-unit acyltransfer and initiate polyketide biosynthesis. ZEA1 also mediates the required C2-C7 cyclization to form the resorcylate core and catalyzes the formation of the macrolactone. ZEB1 is then responsible for the chemical conversion of beta-zearalenonol (beta-ZOL) to ZEA in the biosynthetic pathway. In Gibberella zeae (strain ATCC MYA-4620 / CBS 123657 / FGSC 9075 / NRRL 31084 / PH-1) (Wheat head blight fungus), this protein is FAD-linked oxidoreductase ZEB1.